A 61-amino-acid polypeptide reads, in one-letter code: Metallothionein-2 (61 aa).

Methionine 1 is subject to N-acetylmethionine. Positions 1–29 (MDPNCSCATDGSCSCAGSCKCKQCKCTSC) are beta. Cysteine 5, cysteine 7, cysteine 13, cysteine 15, cysteine 19, cysteine 21, cysteine 24, cysteine 26, cysteine 29, cysteine 33, cysteine 34, cysteine 36, cysteine 37, cysteine 41, cysteine 44, cysteine 48, cysteine 50, and cysteine 57 together coordinate a divalent metal cation. Residues 30–61 (KKSCCSCCPVGCAKCSQGCICKEASDKCSCCA) are alpha. Serine 58 is modified (phosphoserine). Residues cysteine 59 and cysteine 60 each contribute to the a divalent metal cation site.

This sequence belongs to the metallothionein superfamily. Type 1 family.

Its function is as follows. Metallothioneins have a high content of cysteine residues that bind various heavy metals; these proteins are transcriptionally regulated by both heavy metals and glucocorticoids. The polypeptide is Metallothionein-2 (Mt2) (Rattus norvegicus (Rat)).